A 121-amino-acid chain; its full sequence is Ribonuclease P protein component (121 aa).

The protein belongs to the RnpA family. Consists of a catalytic RNA component (M1 or rnpB) and a protein subunit.

The enzyme catalyses Endonucleolytic cleavage of RNA, removing 5'-extranucleotides from tRNA precursor.. Functionally, RNaseP catalyzes the removal of the 5'-leader sequence from pre-tRNA to produce the mature 5'-terminus. It can also cleave other RNA substrates such as 4.5S RNA. The protein component plays an auxiliary but essential role in vivo by binding to the 5'-leader sequence and broadening the substrate specificity of the ribozyme. In Geobacillus thermodenitrificans (strain NG80-2), this protein is Ribonuclease P protein component.